Consider the following 357-residue polypeptide: Peptide chain release factor 1 (357 aa).

Q234 carries the N5-methylglutamine modification. Over residues 284–307 (KKQEQRSNDRKQQVGSGDRSERIR) the composition is skewed to basic and acidic residues. The disordered stretch occupies residues 284–313 (KKQEQRSNDRKQQVGSGDRSERIRTYNFPQ).

This sequence belongs to the prokaryotic/mitochondrial release factor family. In terms of processing, methylated by PrmC. Methylation increases the termination efficiency of RF1.

The protein resides in the cytoplasm. Functionally, peptide chain release factor 1 directs the termination of translation in response to the peptide chain termination codons UAG and UAA. The sequence is that of Peptide chain release factor 1 from Borrelia hermsii (strain HS1 / DAH).